Reading from the N-terminus, the 474-residue chain is 3-isopropylmalate dehydratase large subunit (474 aa).

[4Fe-4S] cluster-binding residues include cysteine 355, cysteine 415, and cysteine 418.

The protein belongs to the aconitase/IPM isomerase family. LeuC type 1 subfamily. As to quaternary structure, heterodimer of LeuC and LeuD. Requires [4Fe-4S] cluster as cofactor.

It carries out the reaction (2R,3S)-3-isopropylmalate = (2S)-2-isopropylmalate. It functions in the pathway amino-acid biosynthesis; L-leucine biosynthesis; L-leucine from 3-methyl-2-oxobutanoate: step 2/4. In terms of biological role, catalyzes the isomerization between 2-isopropylmalate and 3-isopropylmalate, via the formation of 2-isopropylmaleate. In Shewanella sp. (strain ANA-3), this protein is 3-isopropylmalate dehydratase large subunit.